A 308-amino-acid polypeptide reads, in one-letter code: Elongation factor Ts (308 aa).

Positions 80 to 83 are involved in Mg(2+) ion dislocation from EF-Tu; that stretch reads TDFV.

This sequence belongs to the EF-Ts family.

The protein localises to the cytoplasm. In terms of biological role, associates with the EF-Tu.GDP complex and induces the exchange of GDP to GTP. It remains bound to the aminoacyl-tRNA.EF-Tu.GTP complex up to the GTP hydrolysis stage on the ribosome. The polypeptide is Elongation factor Ts (Rhodopseudomonas palustris (strain BisB5)).